The chain runs to 211 residues: Ribosomal RNA small subunit methyltransferase G (211 aa).

S-adenosyl-L-methionine is bound by residues G78, M83, 129–130 (AE), and R144.

It belongs to the methyltransferase superfamily. RNA methyltransferase RsmG family.

It is found in the cytoplasm. It catalyses the reaction guanosine(527) in 16S rRNA + S-adenosyl-L-methionine = N(7)-methylguanosine(527) in 16S rRNA + S-adenosyl-L-homocysteine. Specifically methylates the N7 position of guanine in position 527 of 16S rRNA. This Pseudomonas syringae pv. tomato (strain ATCC BAA-871 / DC3000) protein is Ribosomal RNA small subunit methyltransferase G.